We begin with the raw amino-acid sequence, 648 residues long: Macrolide export ATP-binding/permease protein MacB (648 aa).

Positions 5-243 (LELKDIRRSY…AGGTEPVVNT (239 aa)) constitute an ABC transporter domain. 41-48 (GASGSGKS) contacts ATP. Transmembrane regions (helical) follow at residues 273 to 293 (LLTM…VVVG), 523 to 543 (LFLT…VMNI), 576 to 596 (AVLV…LIAF), and 600 to 620 (LFLP…AFLC).

Belongs to the ABC transporter superfamily. Macrolide exporter (TC 3.A.1.122) family. In terms of assembly, homodimer. Part of the tripartite efflux system MacAB-TolC, which is composed of an inner membrane transporter, MacB, a periplasmic membrane fusion protein, MacA, and an outer membrane component, TolC. The complex forms a large protein conduit and can translocate molecules across both the inner and outer membranes. Interacts with MacA.

It is found in the cell inner membrane. In terms of biological role, part of the tripartite efflux system MacAB-TolC. MacB is a non-canonical ABC transporter that contains transmembrane domains (TMD), which form a pore in the inner membrane, and an ATP-binding domain (NBD), which is responsible for energy generation. Confers resistance against macrolides. This Shigella sonnei (strain Ss046) protein is Macrolide export ATP-binding/permease protein MacB.